A 143-amino-acid polypeptide reads, in one-letter code: Transcription antitermination protein NusB (143 aa).

It belongs to the NusB family.

Functionally, involved in transcription antitermination. Required for transcription of ribosomal RNA (rRNA) genes. Binds specifically to the boxA antiterminator sequence of the ribosomal RNA (rrn) operons. The polypeptide is Transcription antitermination protein NusB (Buchnera aphidicola subsp. Acyrthosiphon pisum (strain APS) (Acyrthosiphon pisum symbiotic bacterium)).